A 676-amino-acid polypeptide reads, in one-letter code: Pre-mRNA-splicing factor CLF1 (676 aa).

HAT repeat units follow at residues Glu-46–Glu-78, Arg-80–Lys-112, Lys-114–Thr-146, Gly-148–Arg-179, Arg-181–Glu-212, Asn-215–Arg-255, Arg-257–Gln-291, Val-301–Glu-333, Leu-336–Lys-369, Lys-379–Arg-415, Gly-417–Lys-449, Arg-451–Met-483, Gly-485–Glu-519, Glu-521–Thr-553, Glu-576–Glu-614, and Ser-620–Pro-652. Residues Gly-616 to Lys-628 are compositionally biased toward basic and acidic residues. Residues Gly-616–Arg-636 are disordered.

It belongs to the crooked-neck family. As to quaternary structure, associated with the spliceosome.

The protein resides in the nucleus. Its function is as follows. Involved in pre-mRNA splicing and cell cycle progression. Required for the spliceosome assembly and initiation of the DNA replication. In Yarrowia lipolytica (strain CLIB 122 / E 150) (Yeast), this protein is Pre-mRNA-splicing factor CLF1 (CLF1).